The sequence spans 290 residues: Thymidylate synthase (290 aa).

DUMP-binding positions include Arg-27 and Arg-152–Arg-153. The Nucleophile role is filled by Cys-172. DUMP-binding positions include Arg-192–Asp-195, Asn-203, and His-233–Tyr-235. Asp-195 is a binding site for (6R)-5,10-methylene-5,6,7,8-tetrahydrofolate. Position 289 (Ala-289) interacts with (6R)-5,10-methylene-5,6,7,8-tetrahydrofolate.

This sequence belongs to the thymidylate synthase family. As to quaternary structure, homodimer.

The catalysed reaction is dUMP + (6R)-5,10-methylene-5,6,7,8-tetrahydrofolate = 7,8-dihydrofolate + dTMP. It functions in the pathway pyrimidine metabolism; dTTP biosynthesis. The protein is Thymidylate synthase (TS) of Ateles.